Consider the following 427-residue polypeptide: UPF0229 protein YeaH (427 aa).

Residues 79–90 (NDHFVQNDRIER) show a composition bias toward basic and acidic residues. Residues 79–110 (NDHFVQNDRIERPQGGGGGSGSGQGQASQDGE) form a disordered region. Gly residues predominate over residues 92-102 (QGGGGGSGSGQ).

It belongs to the UPF0229 family.

This chain is UPF0229 protein YeaH, found in Escherichia coli O9:H4 (strain HS).